Consider the following 249-residue polypeptide: Phosphoribosylaminoimidazole-succinocarboxamide synthase (249 aa).

The protein belongs to the SAICAR synthetase family.

It catalyses the reaction 5-amino-1-(5-phospho-D-ribosyl)imidazole-4-carboxylate + L-aspartate + ATP = (2S)-2-[5-amino-1-(5-phospho-beta-D-ribosyl)imidazole-4-carboxamido]succinate + ADP + phosphate + 2 H(+). It functions in the pathway purine metabolism; IMP biosynthesis via de novo pathway; 5-amino-1-(5-phospho-D-ribosyl)imidazole-4-carboxamide from 5-amino-1-(5-phospho-D-ribosyl)imidazole-4-carboxylate: step 1/2. This chain is Phosphoribosylaminoimidazole-succinocarboxamide synthase, found in Roseiflexus sp. (strain RS-1).